The chain runs to 730 residues: Acetylene hydratase (730 aa).

Residues Cys-9 and Cys-12 each contribute to the [4Fe-4S] cluster site. Asp-13 is a catalytic residue. [4Fe-4S] cluster is bound by residues Cys-16 and Cys-46. Residues Lys-48, 111–114 (TEIN), Cys-141, 172–173 (KN), 177–179 (HNW), 199–202 (LDPR), 218–221 (YGTD), Ser-296, Gln-300, 416–418 (ASN), 422–423 (GY), 442–444 (YDQ), Asp-460, Arg-465, 602–613 (FAGLREDSNFQS), Arg-606, His-676, Asp-699, and Arg-720 contribute to the W-bis(molybdopterin guanine dinucleotide) site.

It belongs to the prokaryotic molybdopterin-containing oxidoreductase family. As to quaternary structure, monomer. The cofactor is [4Fe-4S] cluster. It depends on W-bis(molybdopterin guanine dinucleotide) as a cofactor.

It carries out the reaction acetaldehyde = acetylene + H2O. Its function is as follows. Catalyzes the hydration of acetylene to form acetaldehyde. Ethylene cannot act as a substrate. This chain is Acetylene hydratase, found in Syntrophotalea acetylenica (Pelobacter acetylenicus).